We begin with the raw amino-acid sequence, 372 residues long: Methylthioribose-1-phosphate isomerase 1 (372 aa).

Catalysis depends on D254, which acts as the Proton donor.

Belongs to the eIF-2B alpha/beta/delta subunits family. MtnA subfamily.

It is found in the cytoplasm. The protein localises to the nucleus. The catalysed reaction is 5-(methylsulfanyl)-alpha-D-ribose 1-phosphate = 5-(methylsulfanyl)-D-ribulose 1-phosphate. It participates in amino-acid biosynthesis; L-methionine biosynthesis via salvage pathway; L-methionine from S-methyl-5-thio-alpha-D-ribose 1-phosphate: step 1/6. Catalyzes the interconversion of methylthioribose-1-phosphate (MTR-1-P) into methylthioribulose-1-phosphate (MTRu-1-P). This Trypanosoma cruzi (strain CL Brener) protein is Methylthioribose-1-phosphate isomerase 1.